A 231-amino-acid polypeptide reads, in one-letter code: Phosphatidylserine decarboxylase proenzyme (231 aa).

Ser189 functions as the Schiff-base intermediate with substrate; via pyruvic acid in the catalytic mechanism. Pyruvic acid (Ser); by autocatalysis is present on Ser189.

It belongs to the phosphatidylserine decarboxylase family. PSD-A subfamily. Heterodimer of a large membrane-associated beta subunit and a small pyruvoyl-containing alpha subunit. Requires pyruvate as cofactor. Is synthesized initially as an inactive proenzyme. Formation of the active enzyme involves a self-maturation process in which the active site pyruvoyl group is generated from an internal serine residue via an autocatalytic post-translational modification. Two non-identical subunits are generated from the proenzyme in this reaction, and the pyruvate is formed at the N-terminus of the alpha chain, which is derived from the carboxyl end of the proenzyme. The post-translation cleavage follows an unusual pathway, termed non-hydrolytic serinolysis, in which the side chain hydroxyl group of the serine supplies its oxygen atom to form the C-terminus of the beta chain, while the remainder of the serine residue undergoes an oxidative deamination to produce ammonia and the pyruvoyl prosthetic group on the alpha chain.

The protein resides in the cell membrane. The catalysed reaction is a 1,2-diacyl-sn-glycero-3-phospho-L-serine + H(+) = a 1,2-diacyl-sn-glycero-3-phosphoethanolamine + CO2. It participates in phospholipid metabolism; phosphatidylethanolamine biosynthesis; phosphatidylethanolamine from CDP-diacylglycerol: step 2/2. Its function is as follows. Catalyzes the formation of phosphatidylethanolamine (PtdEtn) from phosphatidylserine (PtdSer). In Chelativorans sp. (strain BNC1), this protein is Phosphatidylserine decarboxylase proenzyme.